A 140-amino-acid polypeptide reads, in one-letter code: MPSSSKSDFSFSTLIIPQHYLRAILKVVSSSSVEVCGFLFGKENRVLKVRFIRNRLNSPVEFEMDPEEMLKALEEAEQENLEVVGIFHSHIACPPIPSGKDLEGMKRWPVIWLIVNEKGEYKAWILSEKNKISEVKIVVE.

The 121-residue stretch at 13–133 (TLIIPQHYLR…WILSEKNKIS (121 aa)) folds into the MPN domain. Residue glutamate 34 is the Proton donor/acceptor of the active site. Histidine 88, histidine 90, and aspartate 101 together coordinate Zn(2+). Positions 88–101 (HSHIACPPIPSGKD) match the JAMM motif motif.

Belongs to the peptidase M67B family. As to quaternary structure, exists in two major states: monomer and homodimer. Both conformational states are catalytically active. Zn(2+) serves as cofactor. The disulfide bridge probably stabilizes the PfJAMM1 homodimer at the optimal growth temperature of the hyperthermophile.

The enzyme catalyses an N(6)-[small archaeal modifier protein]-[protein]-L-lysine + H2O = a [protein]-L-lysine + a [small archaeal modifier protein].. With respect to regulation, inhibited by EDTA in vitro. Functionally, metalloprotease that displays desampylase (DSAMP) activity, cleaving ubiquitin-like small archaeal modifier proteins (SAMP1, SAMP2 and SAMP3) from protein conjugates (isopeptide- and linear-linked). Thus, likely regulates sampylation and the pools of 'free' SAMP available for protein modification. In vitro, is also able to cleave non-physiological ubiquitin (Ub) substrates, such as 'Met1-', 'Lys48-', and 'Lys63'-linked Ub dimers (Ub2), and to remove Ub tags from diverse proteins. In Pyrococcus furiosus (strain ATCC 43587 / DSM 3638 / JCM 8422 / Vc1), this protein is Desampylase.